Here is a 286-residue protein sequence, read N- to C-terminus: Pantothenate synthetase (286 aa).

Met30 to His37 serves as a coordination point for ATP. The Proton donor role is filled by His37. (R)-pantoate is bound at residue Gln61. Gln61 is a beta-alanine binding site. Gly147 to Asp150 contacts ATP. Residue Gln153 coordinates (R)-pantoate. Met184–Arg187 serves as a coordination point for ATP.

It belongs to the pantothenate synthetase family. As to quaternary structure, homodimer.

The protein resides in the cytoplasm. The catalysed reaction is (R)-pantoate + beta-alanine + ATP = (R)-pantothenate + AMP + diphosphate + H(+). Its pathway is cofactor biosynthesis; (R)-pantothenate biosynthesis; (R)-pantothenate from (R)-pantoate and beta-alanine: step 1/1. Functionally, catalyzes the condensation of pantoate with beta-alanine in an ATP-dependent reaction via a pantoyl-adenylate intermediate. The protein is Pantothenate synthetase of Desulfotalea psychrophila (strain LSv54 / DSM 12343).